The chain runs to 716 residues: Polyribonucleotide nucleotidyltransferase (716 aa).

The Mg(2+) site is built by Asp495 and Asp501. Positions 562–621 constitute a KH domain; that stretch reads PRLFRIQINPEQIGLVIGPGGKTIRSITEQTGAKIDIEDTGAVTISAVDADSALRAKSII. The 69-residue stretch at 631–699 folds into the S1 motif domain; the sequence is GDVYIGKVTR…QKGRVNLTRK (69 aa).

Belongs to the polyribonucleotide nucleotidyltransferase family. The cofactor is Mg(2+).

Its subcellular location is the cytoplasm. The enzyme catalyses RNA(n+1) + phosphate = RNA(n) + a ribonucleoside 5'-diphosphate. Functionally, involved in mRNA degradation. Catalyzes the phosphorolysis of single-stranded polyribonucleotides processively in the 3'- to 5'-direction. This is Polyribonucleotide nucleotidyltransferase from Synechococcus sp. (strain ATCC 27144 / PCC 6301 / SAUG 1402/1) (Anacystis nidulans).